The following is a 543-amino-acid chain: Neurofilament light polypeptide (543 aa).

At serine 2 the chain carries N-acetylserine. The interval 2 to 92 (SSFSYEPYYS…LKSIRTQEKA (91 aa)) is head. The O-linked (GlcNAc) threonine glycan is linked to threonine 21. Arginine 23 bears the Asymmetric dimethylarginine; alternate mark. Arginine 23 is subject to Omega-N-methylarginine; alternate. Residue serine 27 is glycosylated (O-linked (GlcNAc) serine). Arginine 30 carries the omega-N-methylarginine modification. Tyrosine 43 carries the post-translational modification Phosphotyrosine. Phosphoserine occurs at positions 56, 67, and 103. The IF rod domain occupies 90 to 400 (EKAQLQDLND…KLLEGEETRL (311 aa)). A coil 1A region spans residues 93–124 (QLQDLNDRFASFIERVHELEQQNKVLEAELLV). Residues 125-137 (LRQKHSEPSRFRA) are linker 1. The coil 1B stretch occupies residues 138 to 234 (LYEQEIRDLR…KVHEEEIAEL (97 aa)). The interval 235 to 252 (QAQIQYAQISVEMDVTKP) is linker 12. The coil 2A stretch occupies residues 253 to 271 (DLSAALKDIRAQYEKLAAK). Residues 272–280 (NMQNAEEWF) form a linker 2 region. Residues 281–396 (KSRFTVLTES…AAYRKLLEGE (116 aa)) are coil 2B. The epitope; recognized by IF-specific monoclonal antibody stretch occupies residues 381-391 (ALDIEIAAYRK). Positions 397 to 443 (ETRLSFTSVGSITSGYSQSSQVFGRSAYGGLQTSSYLMSTRSFPSYY) are tail, subdomain A. The segment at 397-543 (ETRLSFTSVG…GEEQAAKKKD (147 aa)) is tail. The segment at 444–543 (TSHVQEEQIE…GEEQAAKKKD (100 aa)) is tail, subdomain B (acidic). Residues 462–543 (KAEEAKDEPP…GEEQAAKKKD (82 aa)) are disordered. Residues 471–525 (PSEGEAEEEEKDKEEAEEEEAAEEEEAAKEESEEAKEEEEGGEGEEGEETKEAEE) are compositionally biased toward acidic residues. Serine 472 and serine 502 each carry phosphoserine. Threonine 520 bears the Phosphothreonine mark. Over residues 526 to 543 (EEKKVEGAGEEQAAKKKD) the composition is skewed to basic and acidic residues.

This sequence belongs to the intermediate filament family. In terms of assembly, forms homodimers (in vitro). Forms heterodimers with NEFH or NEFM; which can further hetero-oligomerize (in vitro). Forms heterodimers with INA (in vitro). Interacts with ARHGEF28. Interacts with TRIM2. In terms of processing, O-glycosylated. Phosphorylated in the head and rod regions by the PKC kinase PKN1, leading to the inhibition of polymerization. Post-translationally, ubiquitinated in the presence of TRIM2 and UBE2D1.

The protein localises to the cell projection. It localises to the axon. It is found in the cytoplasm. Its subcellular location is the cytoskeleton. Its function is as follows. Neurofilaments usually contain three intermediate filament proteins: NEFL, NEFM, and NEFH which are involved in the maintenance of neuronal caliber. May additionally cooperate with the neuronal intermediate filament proteins PRPH and INA to form neuronal filamentous networks. The protein is Neurofilament light polypeptide (NEFL) of Homo sapiens (Human).